The chain runs to 890 residues: MRLTTSVLLWAATSVLQADATQTYRSPTGPEAYGAYPPRYTVSYTTITSTSTIHSCPPRTTTIFTSSPPPDDGCKFPGCPNQPPKPGSDVHCDIYCWAKGCSLCKNDTCPEQGGIYKRREDMKNIFGRSTGSAEGYNYTPETTCCCCCEPGGGKHTVTVTKTKTETKTETASITKIITDYVTKTVLIPTTVLEPTTIIDPTTVPTTVPTTIPTTVYNETTIHDSTTVSTTVIQPTTISDTTTLTTTFTTVVPTYITTTTFGTVTSVVTVMVPTTITSTYVSTMYTTLPGTTLTTSVTVPGPTVTPPPVTLPPETKIITLPASTVTKVTTLPASTMTVTSTLPASTITQSGTTVTLPGSTTVITSTIPASTITQTYTEPGTVSTVTSTPPPETHVITLPGSTITKVTTLPGTIMTVTQTLPASTVTQSGTTVTIPASTTVITTTLPASTITQTLTEPGKEITVTKTNTVTTTTTSFSISLCPTRTANPTYTPLAPLPSNYIWGCPPGQLCRPKRTPADGQCNFEVGLPSQNFVCSPDECIPSPPRHPPQKWTPGKVEKWVVSPGYFNIDPRKFGLTFDIFSFENVTATSQGYFRRSLSALFKRGPEIVAGECYDECDSAATEAEAVGADPTLCKPDSLFMKLVGQCKKCTNDRSNGTYSDFDTVLFPEFQKWLDYCDTLPIPSGPTTRPEPGMTSSTTSSPTHSTVITSMTSMTTSESSTSMRSSSTATTSETSSTESSRTSSESSTESSTDSSTTERTRTTSTAESTETTEPTSTDASTESTSTATHSSTGSDPESTNTRHPSSTASGSTTTRGGGGGHGSSSSEGPVPTSMGTATTTGGGSIPGSGTGIPPSSSTDPVPFPGGAGSLSPSTWGKVVTCISSMALLVAFI.

Positions 1-20 are cleaved as a signal peptide; it reads MRLTTSVLLWAATSVLQADA. N-linked (GlcNAc...) asparagine glycosylation is found at asparagine 106, asparagine 217, asparagine 583, and asparagine 654. The segment at 680–872 is disordered; the sequence is IPSGPTTRPE…GGAGSLSPST (193 aa). Low complexity-rich tracts occupy residues 693-753 and 760-790; these read TSST…TDSS and TTST…HSST. Polar residues predominate over residues 791-802; the sequence is GSDPESTNTRHP. Low complexity-rich tracts occupy residues 803–812 and 821–837; these read SSTASGSTTT and SSSS…TATT. The span at 838 to 848 shows a compositional bias: gly residues; the sequence is TGGGSIPGSGT. Residue glycine 864 is the site of GPI-anchor amidated glycine attachment. The propeptide at 865-890 is removed in mature form; it reads AGSLSPSTWGKVVTCISSMALLVAFI.

This sequence belongs to the ALS family. In terms of processing, the GPI-anchor is attached to the protein in the endoplasmic reticulum and serves to target the protein to the cell surface. There, the glucosamine-inositol phospholipid moiety is cleaved off and the GPI-modified mannoprotein is covalently attached via its lipidless GPI glycan remnant to the 1,6-beta-glucan of the outer cell wall layer.

The protein resides in the secreted. It localises to the cell membrane. Its subcellular location is the cell wall. Functionally, cell surface adhesion protein which mediates cell agglutination and host tissue adherence. This Arthroderma benhamiae (strain ATCC MYA-4681 / CBS 112371) (Trichophyton mentagrophytes) protein is Agglutinin-like protein ARB_02240.